The sequence spans 161 residues: Phosphotransferase enzyme IIB component GlvB (161 aa).

A helical membrane pass occupies residues 10-32; the sequence is LTQIAIGLCFTLLYFVVFRTLIL. A PTS EIIB type-1 domain is found at 70–152; it reads LDQAAGILQA…DSLINSHQSA (83 aa). The active-site Phosphocysteine intermediate is C92.

It localises to the cell inner membrane. Functionally, the phosphoenolpyruvate-dependent sugar phosphotransferase system (sugar PTS), a major carbohydrate active -transport system, catalyzes the phosphorylation of incoming sugar substrates concomitantly with their translocation across the cell membrane. This operon may be cryptic in wild-type K12 strains. The chain is Phosphotransferase enzyme IIB component GlvB from Escherichia coli (strain K12).